The primary structure comprises 123 residues: Large ribosomal subunit protein uL22c (123 aa).

Belongs to the universal ribosomal protein uL22 family. Part of the 50S ribosomal subunit.

The protein localises to the plastid. Its subcellular location is the chloroplast. Its function is as follows. This protein binds specifically to 23S rRNA. The globular domain of the protein is located near the polypeptide exit tunnel on the outside of the subunit, while an extended beta-hairpin is found that lines the wall of the exit tunnel in the center of the 70S ribosome. The polypeptide is Large ribosomal subunit protein uL22c (rpl22) (Chara vulgaris (Common stonewort)).